The chain runs to 377 residues: NIF3-like protein 1 (377 aa).

Position 109 is an N6-acetyllysine (K109). The tract at residues L244 to I377 is mediates interaction with COPS2. A Phosphothreonine modification is found at T255. Position 259 is a phosphoserine (S259).

It belongs to the GTP cyclohydrolase I type 2/NIF3 family. In terms of assembly, homodimer. Interacts with COPS2. Interacts with THOC7.

The protein resides in the cytoplasm. It is found in the nucleus. May function as a transcriptional corepressor through its interaction with COPS2, negatively regulating the expression of genes involved in neuronal differentiation. This chain is NIF3-like protein 1, found in Bos taurus (Bovine).